A 249-amino-acid chain; its full sequence is Glucosamine-6-phosphate deaminase (249 aa).

The active-site Proton acceptor; for enolization step is the D67. N136 acts as the For ring-opening step in catalysis. The active-site Proton acceptor; for ring-opening step is the H138. E143 functions as the For ring-opening step in the catalytic mechanism.

The protein belongs to the glucosamine/galactosamine-6-phosphate isomerase family. NagB subfamily.

It catalyses the reaction alpha-D-glucosamine 6-phosphate + H2O = beta-D-fructose 6-phosphate + NH4(+). Its pathway is amino-sugar metabolism; N-acetylneuraminate degradation; D-fructose 6-phosphate from N-acetylneuraminate: step 5/5. Catalyzes the reversible isomerization-deamination of glucosamine 6-phosphate (GlcN6P) to form fructose 6-phosphate (Fru6P) and ammonium ion. This chain is Glucosamine-6-phosphate deaminase, found in Clostridioides difficile (strain 630) (Peptoclostridium difficile).